The primary structure comprises 386 residues: CUE domain-containing protein 1 (386 aa).

A compositionally biased stretch (low complexity) spans 1–10 (MTSLFRRSSS). A disordered region spans residues 1–40 (MTSLFRRSSSGSGGGGTAGARGGGGGTAAPQELNNSRPAR). The segment covering 11 to 27 (GSGGGGTAGARGGGGGT) has biased composition (gly residues). In terms of domain architecture, CUE spans 46–89 (EFNQAMDDFKTMFPNMDYDIIECVLRANSGAVDATIDQLLQMNL). Disordered regions lie at residues 147-172 (LAPP…RYRN), 195-225 (SIQG…DQES), and 367-386 (DFRG…REGQ). The span at 199–209 (NAGGPKPGSGE) shows a compositional bias: gly residues.

The chain is CUE domain-containing protein 1 (CUEDC1) from Homo sapiens (Human).